Here is a 404-residue protein sequence, read N- to C-terminus: MLKCKQPGARFIHGAVHLPSGQIVFHTIHSPTLASALGLPGENVPIPALFRASGLNVRESLPMTNMRAPIISLARLILAPNPYILEGQLTVGMTQDNGIPVLFARPVIEVKSGPESNIKASSQLMIAEDSCLNQIAPFSASEHPAFSMVESVKRVRVDEGANTRRTIRDILEIPVTVLSSLQLSPTKSILKKAPEPPPPEPQATFDATPYARIFYDIGRQVPKLGNAPAAQVSNVLIANRSHNSLRLVPNPDLLPLQHLYLKHVVLKSLNLENIVQDFEAIFTSPSDTISEAETKAFEKLVEQAKNTVENIVFCLNSICSTSTLPDVVPDVNNPNISLALEKYFLMFPPSGTIMRNVRFATPIVRLLCQGAELGTMAQFLGKYIKVKKETGMYTLVKLYYLLRI.

The protein belongs to the lymphocryptovirus BTRF1 family.

This is an uncharacterized protein from Epstein-Barr virus (strain GD1) (HHV-4).